Here is an 80-residue protein sequence, read N- to C-terminus: Cell division activator CedA (80 aa).

It belongs to the CedA family.

Its function is as follows. Activates the cell division inhibited by chromosomal DNA over-replication. This Salmonella typhimurium (strain LT2 / SGSC1412 / ATCC 700720) protein is Cell division activator CedA.